Consider the following 64-residue polypeptide: Neurotoxin lambda-MeuTx (64 aa).

The N-terminal stretch at Met-1 to Ala-18 is a signal peptide. A propeptide spanning residues Glu-19 to Arg-27 is cleaved from the precursor. Cystine bridges form between Cys-29/Cys-43, Cys-36/Cys-49, and Cys-42/Cys-58.

Belongs to the scorpion calcin-like family. Expressed by the venom gland.

The protein localises to the secreted. Its function is as follows. Voltage-gated potassium channel (Kv) inhibitor. In addition it may increase intracellular calcium release through the activation of nuclear inositol 1,4,5-trisphosphate receptors (ITPR) of cardiomyocytes, thereby causing an increase in the contraction frequency of these cells. This Mesobuthus eupeus (Lesser Asian scorpion) protein is Neurotoxin lambda-MeuTx.